The sequence spans 58 residues: MLGWALTFLVVAIIAGVLGFGGIASGAASIAKIIFFIFLALLVISLVVNALKGRGPKV.

Transmembrane regions (helical) follow at residues 4–24 (WALT…GGIA) and 28–48 (ASIA…SLVV).

The protein belongs to the UPF0391 family.

It is found in the cell membrane. The chain is UPF0391 membrane protein ABO_0024 from Alcanivorax borkumensis (strain ATCC 700651 / DSM 11573 / NCIMB 13689 / SK2).